The chain runs to 1488 residues: Calmodulin binding protein PICBP (1488 aa).

Disordered regions lie at residues 1–31, 63–112, 280–329, and 378–414; these read MSNPMFPEKWEESSTSKSSRRVHKRRERKMW, TAES…SRIS, GPLG…GRSS, and HDHDDGKVDGTTSDGTVGDNEEVCREGSSGELREEDG. A compositionally biased stretch (basic residues) spans 18–31; sequence SSRRVHKRRERKMW. Positions 76–86 are enriched in basic and acidic residues; sequence DDSRTYSKSSD. Residues 98–107 show a composition bias toward basic residues; it reads SVKRRAKSKS. Residues 297–312 are compositionally biased toward acidic residues; sequence DNVDGDSDEEVFEEEV. Calmodulin-binding regions lie at residues 493–592 and 831–938; these read TFHM…SLIP and NSLK…DIVL. Disordered regions lie at residues 816 to 844 and 941 to 971; these read IPDSSSDEESVSESSNSLKEEKEHQGETK and HDTPKQTKNSDTPRNNDETKEGKPRVEEGCE. Basic and acidic residues-rich tracts occupy residues 833-844 and 954-971; these read LKEEKEHQGETK and RNNDETKEGKPRVEEGCE. Positions 1135 to 1229 are calmodulin-binding; it reads EKRVKGWNNV…SLLAQAFDTI (95 aa). Disordered regions lie at residues 1232-1252 and 1316-1340; these read QDMGSGSTPGSAASSRNISRQ and EKNQTLPEETRKEEEEEELKEDTSV. Residues 1235–1252 show a composition bias toward low complexity; it reads GSGSTPGSAASSRNISRQ. Residues 1316–1328 are compositionally biased toward basic and acidic residues; that stretch reads EKNQTLPEETRKE. Positions 1379-1483 are calmodulin-binding; it reads RQKSETLQVS…QLLVQAFESL (105 aa).

Binds calmodulin in a calcium-dependent manner in vitro. May play a role in general plant defense including R gene-mediated responses. The chain is Calmodulin binding protein PICBP from Arabidopsis thaliana (Mouse-ear cress).